Consider the following 347-residue polypeptide: MDLQTQLQELKTSTQAKLAEMRGEHSKELQELRVAVLGKKGSLTELLKGLKDLPSEERPTVGKMVNEVRDVLTEAFDEAAKVVEAAKIQAQLDSESLDVTLPGRQVNLGNRHILSQIAEEIEDIFLGMGFQIVDGFEVETDYYNFERMNLPKDHPARDMQDTFYITEEILLRTHTSPVQARTLDKHDFSKGPLKMISPGRVFRRDTDDATHSHQFHQIEGLVVGKNISMGDLKGTLEMIIQKMFGAERRIRLRPSYFPFTEPSVEVDVSCFKCGGKGCNVCKNTGWIEILGAGMVHPQVLEMSGVDSEEYSGFAFGLGQERIAMLRYGINDIRGFYQGDVRFSEQFK.

Glu261 contacts Mg(2+).

It belongs to the class-II aminoacyl-tRNA synthetase family. Phe-tRNA synthetase alpha subunit type 1 subfamily. Tetramer of two alpha and two beta subunits. Mg(2+) serves as cofactor.

It is found in the cytoplasm. It catalyses the reaction tRNA(Phe) + L-phenylalanine + ATP = L-phenylalanyl-tRNA(Phe) + AMP + diphosphate + H(+). The protein is Phenylalanine--tRNA ligase alpha subunit of Streptococcus thermophilus (strain ATCC BAA-491 / LMD-9).